Reading from the N-terminus, the 237-residue chain is Uridylate kinase (237 aa).

11-14 provides a ligand contact to ATP; the sequence is KLSG. Glycine 53 is a UMP binding site. Residues glycine 54 and arginine 58 each coordinate ATP. Residues aspartate 73 and 134 to 141 contribute to the UMP site; that span reads TGNPFFTT. Threonine 161, tyrosine 167, and aspartate 170 together coordinate ATP.

It belongs to the UMP kinase family. As to quaternary structure, homohexamer.

It localises to the cytoplasm. The enzyme catalyses UMP + ATP = UDP + ADP. Its pathway is pyrimidine metabolism; CTP biosynthesis via de novo pathway; UDP from UMP (UMPK route): step 1/1. Inhibited by UTP. Its function is as follows. Catalyzes the reversible phosphorylation of UMP to UDP. In Burkholderia cenocepacia (strain HI2424), this protein is Uridylate kinase.